The following is a 174-amino-acid chain: ATP-dependent protease subunit HslV (174 aa).

Residue Thr4 is part of the active site. Na(+) contacts are provided by Ala159, Cys162, and Thr165.

This sequence belongs to the peptidase T1B family. HslV subfamily. In terms of assembly, a double ring-shaped homohexamer of HslV is capped on each side by a ring-shaped HslU homohexamer. The assembly of the HslU/HslV complex is dependent on binding of ATP.

The protein localises to the cytoplasm. It catalyses the reaction ATP-dependent cleavage of peptide bonds with broad specificity.. Allosterically activated by HslU binding. Functionally, protease subunit of a proteasome-like degradation complex believed to be a general protein degrading machinery. The sequence is that of ATP-dependent protease subunit HslV from Moorella thermoacetica (strain ATCC 39073 / JCM 9320).